We begin with the raw amino-acid sequence, 371 residues long: uncharacterized protein (371 aa).

Helical transmembrane passes span 4–24 (LPMLWFFFCVTVLIIGYFIYG), 60–82 (LIQLLNIAGTGPIFGPILGALYG), 87–109 (LWIVIGCIFAGAVHDYFCGMLSI), 130–150 (VFINTLALVLLLLVGVVFVAS), 197–217 (VVAVWTAIIFAYYILATLLPV), 224–244 (IYPLFGALLLFMSVGMVYGLV), 282–302 (VPIWPLLFLTISCGALSGFHA), and 320–340 (FIFYGAMITEGVIALVWCMVG).

This sequence belongs to the peptide transporter carbon starvation (CstA) (TC 2.A.114) family.

It is found in the cell membrane. This is an uncharacterized protein from Haemophilus influenzae (strain ATCC 51907 / DSM 11121 / KW20 / Rd).